Reading from the N-terminus, the 441-residue chain is Serine/threonine-protein kinase prk-2 (441 aa).

In terms of domain architecture, Protein kinase spans 31 to 285; it reads YKLKAELGRG…LEAILNHPWV (255 aa). ATP-binding positions include 37-45 and Lys60; that span reads LGRGGFGVV. The active-site Proton acceptor is the Asp158. The segment at 301–364 is disordered; the sequence is QKKTSESSDD…NQKKPNHKEF (64 aa). The segment covering 303–320 has biased composition (basic and acidic residues); that stretch reads KTSESSDDHHSETLGDHS. The span at 328 to 338 shows a compositional bias: polar residues; it reads PPTSSVSQQPG.

Belongs to the protein kinase superfamily. Ser/Thr protein kinase family. PIM subfamily. The cofactor is Mg(2+).

It carries out the reaction L-seryl-[protein] + ATP = O-phospho-L-seryl-[protein] + ADP + H(+). It catalyses the reaction L-threonyl-[protein] + ATP = O-phospho-L-threonyl-[protein] + ADP + H(+). Functionally, involved in the negative regulation of synaptic differentiation in PLM neurons. The sequence is that of Serine/threonine-protein kinase prk-2 from Caenorhabditis elegans.